The sequence spans 293 residues: MELLCCEGTRLAPRAGPDPRLLGDQRVLQSLLRLEERYVPRGSYFQCVQKEIKPHMRKMLAYWMLEVCEEQRCEEDVFPLAMNYLDRYLSCVPTRKAQLQLLGTVCLLLASKLRETTPLTIEKLCIYTDQAMAPWQLREWEVLVLGKLKWDLAAVIAHDFLALILHRLSLPSDRQALVKKHAQTFLALCATDYTFAMYPPSMIATGSIGAAVLGLGACSMSADELTELLAGITGTEVDCLRACQEQQIEAALRESLREAAQTAPSPVPKAPGGSSSQGPSQTSTPTDVTAIHL.

The region spanning 27–152 is the Cyclin N-terminal domain; the sequence is VLQSLLRLEE…LVLGKLKWDL (126 aa). The disordered stretch occupies residues 257-293; the sequence is REAAQTAPSPVPKAPGGSSSQGPSQTSTPTDVTAIHL. Phosphoserine is present on residues serine 265 and serine 280. Low complexity predominate over residues 271–286; it reads PGGSSSQGPSQTSTPT. Threonine 284 is modified (phosphothreonine).

Belongs to the cyclin family. Cyclin D subfamily. Interacts with the CDK4 and CDK6 protein kinases to form a serine/threonine kinase holoenzyme complex. The cyclin subunit imparts substrate specificity to the complex. Interacts with ATF5. Interacts with EIF3K. Component of the ternary complex cyclin D/CDK4/CDKN1B required for nuclear translocation and modulation of CDK4-mediated kinase activity. Can form similar complexes with either CDKN1A or CDKN2A. Post-translationally, phosphorylation at Thr-284 by MAP kinases is required for ubiquitination and degradation by the DCX(AMBRA1) complex. In terms of processing, ubiquitinated by the DCX(AMBRA1) complex during the transition from G1 to S cell phase, leading to its degradation: ubiquitination is dependent on Thr-284 phosphorylation. The DCX(AMBRA1) complex represents the major regulator of CCND3 stability during the G1/S transition. Polyubiquitinated by the SCF(FBXL2) complex, leading to proteasomal degradation.

The protein localises to the nucleus. The protein resides in the cytoplasm. Its function is as follows. Regulatory component of the cyclin D3-CDK4 (DC) complex that phosphorylates and inhibits members of the retinoblastoma (RB) protein family including RB1 and regulates the cell-cycle during G(1)/S transition. Phosphorylation of RB1 allows dissociation of the transcription factor E2F from the RB/E2F complex and the subsequent transcription of E2F target genes which are responsible for the progression through the G(1) phase. Hypophosphorylates RB1 in early G(1) phase. Cyclin D-CDK4 complexes are major integrators of various mitogenenic and antimitogenic signals. Component of the ternary complex, cyclin D3/CDK4/CDKN1B, required for nuclear translocation and activity of the cyclin D-CDK4 complex. Shows transcriptional coactivator activity with ATF5 independently of CDK4. This Rattus norvegicus (Rat) protein is G1/S-specific cyclin-D3.